Consider the following 496-residue polypeptide: Genome polyprotein (496 aa).

Residues Ser1–Ser447 lie on the Extracellular side of the membrane. 6 disulfide bridges follow: Cys3–Cys30, Cys60–Cys116, Cys60–Cys121, Cys74–Cys105, Cys92–Cys116, and Cys92–Cys121. The interval Asp98–Gly111 is fusion peptide. The N-linked (GlcNAc...) asparagine; by host glycan is linked to Asn154. 2 cysteine pairs are disulfide-bonded: Cys186-Cys290 and Cys307-Cys338. The helical transmembrane segment at Ile448–Gly468 threads the bilayer. Topologically, residues Leu469–Ser479 are cytoplasmic. A helical transmembrane segment spans residues Phe480–Ala496.

Homodimer; in the endoplasmic reticulum and Golgi. In terms of processing, N-glycosylated.

The protein resides in the virion membrane. The protein localises to the host endoplasmic reticulum membrane. Its function is as follows. Binds to host cell surface receptor and mediates fusion between viral and cellular membranes. Envelope protein is synthesized in the endoplasmic reticulum in the form of heterodimer with protein prM. They play a role in virion budding in the ER, and the newly formed immature particle is covered with 60 spikes composed of heterodimer between precursor prM and envelope protein E. The virion is transported to the Golgi apparatus where the low pH causes dissociation of PrM-E heterodimers and formation of E homodimers. prM-E cleavage is ineficient, and many virions are only partially matured. These uncleaved prM would play a role in immune evasion. This Bos taurus (Bovine) protein is Genome polyprotein.